A 176-amino-acid chain; its full sequence is RING-H2 finger protein ATL14 (176 aa).

A disordered region spans residues Met-1–Thr-26. A helical transmembrane segment spans residues Phe-37–Ser-57. The RING-type; atypical zinc-finger motif lies at Cys-115 to Arg-157.

This sequence belongs to the RING-type zinc finger family. ATL subfamily.

The protein localises to the membrane. The enzyme catalyses S-ubiquitinyl-[E2 ubiquitin-conjugating enzyme]-L-cysteine + [acceptor protein]-L-lysine = [E2 ubiquitin-conjugating enzyme]-L-cysteine + N(6)-ubiquitinyl-[acceptor protein]-L-lysine.. It functions in the pathway protein modification; protein ubiquitination. This is RING-H2 finger protein ATL14 (ATL14) from Arabidopsis thaliana (Mouse-ear cress).